The chain runs to 305 residues: Cell division control protein 2 homolog C (305 aa).

In terms of domain architecture, Protein kinase spans 4–297 (YEKLEKVGEG…AKAALDHPYF (294 aa)). Residues 10 to 18 (VGEGTYGKV) and Lys-33 each bind ATP. Thr-14 carries the post-translational modification Phosphothreonine. A Phosphotyrosine modification is found at Tyr-15. Residue Asp-138 is the Proton acceptor of the active site. Residue Thr-172 is modified to Phosphothreonine; by CAK.

The protein belongs to the protein kinase superfamily. CMGC Ser/Thr protein kinase family. CDC2/CDKX subfamily.

It carries out the reaction L-seryl-[protein] + ATP = O-phospho-L-seryl-[protein] + ADP + H(+). It catalyses the reaction L-threonyl-[protein] + ATP = O-phospho-L-threonyl-[protein] + ADP + H(+). The catalysed reaction is [DNA-directed RNA polymerase] + ATP = phospho-[DNA-directed RNA polymerase] + ADP + H(+). Plays a key role in the control of the eukaryotic cell cycle. The polypeptide is Cell division control protein 2 homolog C (CDC2C) (Antirrhinum majus (Garden snapdragon)).